Reading from the N-terminus, the 148-residue chain is Nucleoside diphosphate kinase (148 aa).

Positions 9, 57, 85, 91, 102, and 112 each coordinate ATP. Position 91 is a phosphothreonine (threonine 91). The Pros-phosphohistidine intermediate role is filled by histidine 115. Phosphoserine is present on serine 122.

This sequence belongs to the NDK family. Homotetramer. It depends on Mg(2+) as a cofactor.

It localises to the cytoplasm. It carries out the reaction a 2'-deoxyribonucleoside 5'-diphosphate + ATP = a 2'-deoxyribonucleoside 5'-triphosphate + ADP. The catalysed reaction is a ribonucleoside 5'-diphosphate + ATP = a ribonucleoside 5'-triphosphate + ADP. Functionally, major role in the synthesis of nucleoside triphosphates other than ATP. The ATP gamma phosphate is transferred to the NDP beta phosphate via a ping-pong mechanism, using a phosphorylated active-site intermediate. The polypeptide is Nucleoside diphosphate kinase (Bacillus cereus (strain ATCC 10987 / NRS 248)).